We begin with the raw amino-acid sequence, 289 residues long: Myoblast determination protein 1 homolog A (289 aa).

The region spanning 95 to 146 (DRRKAATMRERRRLSKVNEAFETLKRYTSTNPNQRLPKVEILRNAIRYIESL) is the bHLH domain. The disordered stretch occupies residues 165–212 (SGDSDASSPRSNCSDGMMDYNSPPCGSRRRNSYDSSFYSDSPNDSRLG). Polar residues-rich tracts occupy residues 168–178 (SDASSPRSNCS) and 197–208 (YDSSFYSDSPND).

In terms of assembly, efficient DNA binding requires dimerization with another bHLH protein.

Its subcellular location is the nucleus. Functionally, may act as a transcriptional activator that promotes transcription of muscle-specific target genes and plays a role in muscle differentiation. In Xenopus laevis (African clawed frog), this protein is Myoblast determination protein 1 homolog A (myod1-a).